The following is a 105-amino-acid chain: Nucleoid-associated protein Sca_0120 (105 aa).

The segment at Met1 to Ser36 is disordered. Residues Met7 to Lys16 are compositionally biased toward low complexity. Over residues Lys20–Glu34 the composition is skewed to basic and acidic residues.

This sequence belongs to the YbaB/EbfC family. Homodimer.

The protein resides in the cytoplasm. The protein localises to the nucleoid. Functionally, binds to DNA and alters its conformation. May be involved in regulation of gene expression, nucleoid organization and DNA protection. This is Nucleoid-associated protein Sca_0120 from Staphylococcus carnosus (strain TM300).